Reading from the N-terminus, the 333-residue chain is Phosphate acetyltransferase (333 aa).

This sequence belongs to the phosphate acetyltransferase and butyryltransferase family. As to quaternary structure, homodimer.

The protein resides in the cell membrane. It catalyses the reaction acetyl-CoA + phosphate = acetyl phosphate + CoA. It participates in metabolic intermediate biosynthesis; acetyl-CoA biosynthesis; acetyl-CoA from acetate: step 2/2. This is Phosphate acetyltransferase (pta) from Methanosarcina thermophila.